A 44-amino-acid polypeptide reads, in one-letter code: Photosystem I reaction center subunit IX (44 aa).

Residues 7–27 (YLSVAPVLSTLWFASLAGLLI) traverse the membrane as a helical segment.

It belongs to the PsaJ family.

It localises to the plastid. Its subcellular location is the chloroplast thylakoid membrane. May help in the organization of the PsaE and PsaF subunits. This chain is Photosystem I reaction center subunit IX, found in Barbarea verna (Land cress).